The following is a 279-amino-acid chain: Tryptophan 2,3-dioxygenase (279 aa).

Residues 48–52 (FIVIH), tyrosine 110, and arginine 114 each bind substrate. Residue histidine 237 participates in heme binding. Threonine 251 lines the substrate pocket.

This sequence belongs to the tryptophan 2,3-dioxygenase family. As to quaternary structure, homotetramer. The cofactor is heme.

The catalysed reaction is L-tryptophan + O2 = N-formyl-L-kynurenine. It participates in amino-acid degradation; L-tryptophan degradation via kynurenine pathway; L-kynurenine from L-tryptophan: step 1/2. In terms of biological role, heme-dependent dioxygenase that catalyzes the oxidative cleavage of the L-tryptophan (L-Trp) pyrrole ring and converts L-tryptophan to N-formyl-L-kynurenine. Catalyzes the oxidative cleavage of the indole moiety. In Bacillus cereus (strain ZK / E33L), this protein is Tryptophan 2,3-dioxygenase.